The chain runs to 440 residues: UDP-N-acetylmuramoylalanine--D-glutamate ligase (440 aa).

Gly115–Thr121 contacts ATP.

It belongs to the MurCDEF family.

The protein resides in the cytoplasm. The catalysed reaction is UDP-N-acetyl-alpha-D-muramoyl-L-alanine + D-glutamate + ATP = UDP-N-acetyl-alpha-D-muramoyl-L-alanyl-D-glutamate + ADP + phosphate + H(+). The protein operates within cell wall biogenesis; peptidoglycan biosynthesis. Cell wall formation. Catalyzes the addition of glutamate to the nucleotide precursor UDP-N-acetylmuramoyl-L-alanine (UMA). The sequence is that of UDP-N-acetylmuramoylalanine--D-glutamate ligase from Aliivibrio fischeri (strain MJ11) (Vibrio fischeri).